The primary structure comprises 86 residues: Small ribosomal subunit protein uS17 (86 aa).

It belongs to the universal ribosomal protein uS17 family. Part of the 30S ribosomal subunit.

Functionally, one of the primary rRNA binding proteins, it binds specifically to the 5'-end of 16S ribosomal RNA. The chain is Small ribosomal subunit protein uS17 from Shouchella clausii (strain KSM-K16) (Alkalihalobacillus clausii).